The sequence spans 217 residues: Probable lipoprotein CPn_0875/CP_0994/CPj0875/CpB0904 (217 aa).

Positions methionine 1–serine 21 are cleaved as a signal peptide. A lipid anchor (N-palmitoyl cysteine) is attached at cysteine 22. A lipid anchor (S-diacylglycerol cysteine) is attached at cysteine 22.

Belongs to the chlamydial CPn_0875/CT_734/TC_0107 family.

It localises to the cell membrane. The protein is Probable lipoprotein CPn_0875/CP_0994/CPj0875/CpB0904 of Chlamydia pneumoniae (Chlamydophila pneumoniae).